The following is a 59-amino-acid chain: MLNIFSLIGLNSALYSSSCFFAKLPEAYAFLSPIVDFMPVIPLLFFLLAFVWQAAVSFR.

The propeptide occupies 1–22 (MLNIFSLIGLNSALYSSSCFFA). A helical transmembrane segment spans residues 30-50 (FLSPIVDFMPVIPLLFFLLAF).

The protein belongs to the PsbK family. PSII is composed of 1 copy each of membrane proteins PsbA, PsbB, PsbC, PsbD, PsbE, PsbF, PsbH, PsbI, PsbJ, PsbK, PsbL, PsbM, PsbT, PsbX, PsbY, PsbZ, Psb30/Ycf12, at least 3 peripheral proteins of the oxygen-evolving complex and a large number of cofactors. It forms dimeric complexes.

Its subcellular location is the plastid. The protein resides in the chloroplast thylakoid membrane. Functionally, one of the components of the core complex of photosystem II (PSII). PSII is a light-driven water:plastoquinone oxidoreductase that uses light energy to abstract electrons from H(2)O, generating O(2) and a proton gradient subsequently used for ATP formation. It consists of a core antenna complex that captures photons, and an electron transfer chain that converts photonic excitation into a charge separation. The protein is Photosystem II reaction center protein K of Silene latifolia (White campion).